We begin with the raw amino-acid sequence, 459 residues long: tRNA modification GTPase MnmE (459 aa).

Residues Arg-25, Glu-87, and Arg-126 each contribute to the (6S)-5-formyl-5,6,7,8-tetrahydrofolate site. The TrmE-type G domain maps to Gly-221–Gln-380. K(+) is bound at residue Asn-231. GTP contacts are provided by residues Asn-231–Ser-236, Thr-250–Thr-256, and Asp-275–Gly-278. A Mg(2+)-binding site is contributed by Ser-235. Residues Thr-250, Leu-252, and Thr-255 each contribute to the K(+) site. Thr-256 lines the Mg(2+) pocket. Residue Lys-459 coordinates (6S)-5-formyl-5,6,7,8-tetrahydrofolate.

Belongs to the TRAFAC class TrmE-Era-EngA-EngB-Septin-like GTPase superfamily. TrmE GTPase family. Homodimer. Heterotetramer of two MnmE and two MnmG subunits. The cofactor is K(+).

The protein localises to the cytoplasm. Its function is as follows. Exhibits a very high intrinsic GTPase hydrolysis rate. Involved in the addition of a carboxymethylaminomethyl (cmnm) group at the wobble position (U34) of certain tRNAs, forming tRNA-cmnm(5)s(2)U34. The sequence is that of tRNA modification GTPase MnmE from Nostoc sp. (strain PCC 7120 / SAG 25.82 / UTEX 2576).